Consider the following 182-residue polypeptide: Ribosome-recycling factor (182 aa).

The protein belongs to the RRF family.

Its subcellular location is the cytoplasm. Responsible for the release of ribosomes from messenger RNA at the termination of protein biosynthesis. May increase the efficiency of translation by recycling ribosomes from one round of translation to another. The chain is Ribosome-recycling factor from Prochlorococcus marinus subsp. pastoris (strain CCMP1986 / NIES-2087 / MED4).